We begin with the raw amino-acid sequence, 239 residues long: RNA polymerase sigma-35 factor (239 aa).

The propeptide occupies 1-27 (MMKLKFYLVYLWYKVLLKLGIKTDEIY). The short motif at 86–99 (DLISIGTIGLIKAV) is the Polymerase core binding element. The H-T-H motif DNA-binding region spans 206–225 (QKDVADMLGISQSYISRLEK).

The protein belongs to the sigma-70 factor family. Proteolytically cleaved in the N-terminus probably by a SpoIIGA homolog to yield the active peptide.

Functionally, sigma factors are initiation factors that promote the attachment of RNA polymerase to specific initiation sites and are then released. This sigma factor directs the transcription of crystal protein genes, a sporulation-regulated event. In Bacillus anthracis, this protein is RNA polymerase sigma-35 factor (sigE).